Here is a 741-residue protein sequence, read N- to C-terminus: 1,4-alpha-glucan branching enzyme GlgB (741 aa).

Asp-420 serves as the catalytic Nucleophile. Glu-473 serves as the catalytic Proton donor.

Belongs to the glycosyl hydrolase 13 family. GlgB subfamily. Monomer.

It carries out the reaction Transfers a segment of a (1-&gt;4)-alpha-D-glucan chain to a primary hydroxy group in a similar glucan chain.. Its pathway is glycan biosynthesis; glycogen biosynthesis. Its function is as follows. Catalyzes the formation of the alpha-1,6-glucosidic linkages in glycogen by scission of a 1,4-alpha-linked oligosaccharide from growing alpha-1,4-glucan chains and the subsequent attachment of the oligosaccharide to the alpha-1,6 position. This chain is 1,4-alpha-glucan branching enzyme GlgB, found in Pseudomonas syringae pv. tomato (strain ATCC BAA-871 / DC3000).